The following is a 228-amino-acid chain: ATP synthase subunit a (228 aa).

6 helical membrane passes run 19-39, 81-101, 107-127, 136-156, 178-198, and 204-224; these read AIYI…AVAV, LIAT…IPGF, SLNL…FEGI, FAGF…IEVI, LFLL…PYAL, and ILQA…AVVV.

Belongs to the ATPase A chain family. F-type ATPases have 2 components, CF(1) - the catalytic core - and CF(0) - the membrane proton channel. CF(1) has five subunits: alpha(3), beta(3), gamma(1), delta(1), epsilon(1). CF(0) has three main subunits: a(1), b(2) and c(9-12). The alpha and beta chains form an alternating ring which encloses part of the gamma chain. CF(1) is attached to CF(0) by a central stalk formed by the gamma and epsilon chains, while a peripheral stalk is formed by the delta and b chains.

Its subcellular location is the cell inner membrane. Functionally, key component of the proton channel; it plays a direct role in the translocation of protons across the membrane. The polypeptide is ATP synthase subunit a (Campylobacter hominis (strain ATCC BAA-381 / DSM 21671 / CCUG 45161 / LMG 19568 / NCTC 13146 / CH001A)).